Reading from the N-terminus, the 269-residue chain is UPF0329 protein ECU04_1660 (269 aa).

A compositionally biased stretch (basic and acidic residues) spans 1-12 (MEERERGKEKGS). The tract at residues 1-74 (MEERERGKEK…SPKEKSKGEE (74 aa)) is disordered. The span at 13–23 (KGKGRKKRGKK) shows a compositional bias: basic residues. Residues 24 to 36 (GAGEAKEESKEED) are compositionally biased toward basic and acidic residues. The span at 37–51 (RGEEEEESVEADVPV) shows a compositional bias: acidic residues.

The protein belongs to the UPF0329 family.

The polypeptide is UPF0329 protein ECU04_1660 (Encephalitozoon cuniculi (strain GB-M1) (Microsporidian parasite)).